Consider the following 282-residue polypeptide: Elongation factor Ts (282 aa).

The interval 80–83 (TDFV) is involved in Mg(2+) ion dislocation from EF-Tu.

The protein belongs to the EF-Ts family.

The protein localises to the cytoplasm. Its function is as follows. Associates with the EF-Tu.GDP complex and induces the exchange of GDP to GTP. It remains bound to the aminoacyl-tRNA.EF-Tu.GTP complex up to the GTP hydrolysis stage on the ribosome. The chain is Elongation factor Ts from Chlamydia trachomatis serovar L2 (strain ATCC VR-902B / DSM 19102 / 434/Bu).